Reading from the N-terminus, the 131-residue chain is L-aspartate semialdehyde sulfurtransferase iron-sulfur subunit (131 aa).

4Fe-4S ferredoxin-type domains are found at residues 73–102 (KVIKRDLEKCVHCGCCITQCPINVIYMDED) and 103–131 (YNVVFKEEDCVGCKNCLKACPFKAIEIFE). Cysteine 82, cysteine 85, cysteine 88, cysteine 92, cysteine 112, cysteine 115, cysteine 118, and cysteine 122 together coordinate [4Fe-4S] cluster.

In terms of assembly, may form a complex with MJ0100. Requires [4Fe-4S] cluster as cofactor.

It functions in the pathway amino-acid biosynthesis. Required for O-acetylhomoserine sulfhydrylase (OAHS)-independent homocysteine (Hcy) biosynthesis. Together with MJ0100, catalyzes the condensation of sulfide with aspartate semialdehyde to generate homocysteine. May be involved in the reduction of the disulfide formed in MJ0100. The chain is L-aspartate semialdehyde sulfurtransferase iron-sulfur subunit from Methanocaldococcus jannaschii (strain ATCC 43067 / DSM 2661 / JAL-1 / JCM 10045 / NBRC 100440) (Methanococcus jannaschii).